Consider the following 173-residue polypeptide: Alpha-crystallin A chain (173 aa).

Methionine 1 carries the post-translational modification N-acetylmethionine. Positions 1-63 (MDIAIQHPWF…RTVLDSGISE (63 aa)) are required for complex formation with BFSP1 and BFSP2. Glutamine 6 carries the deamidated glutamine; partial modification. The residue at position 45 (serine 45) is a Phosphoserine. Glutamine 50 is subject to Deamidated glutamine; partial. The 111-residue stretch at 52–162 (LFRTVLDSGI…GHSERAIPVS (111 aa)) folds into the sHSP domain. An N6-acetyllysine mark is found at lysine 70 and lysine 99. Residue histidine 100 participates in Zn(2+) binding. The residue at position 101 (asparagine 101) is a Deamidated asparagine; partial. 2 residues coordinate Zn(2+): glutamate 102 and histidine 107. Serine 122 carries the phosphoserine modification. The residue at position 123 (asparagine 123) is a Deamidated asparagine; partial. The interval 144–173 (PKVPSGMDAGHSERAIPVSREEKPSSAPSS) is disordered. Basic and acidic residues predominate over residues 153-167 (GHSERAIPVSREEKP). Histidine 154 lines the Zn(2+) pocket. Serine 162 carries O-linked (GlcNAc) serine glycosylation.

The protein belongs to the small heat shock protein (HSP20) family. As to quaternary structure, heteromer composed of three CRYAA and one CRYAB subunits. Inter-subunit bridging via zinc ions enhances stability, which is crucial as there is no protein turn over in the lens. Can also form homodimers and homotetramers (dimers of dimers) which serve as the building blocks of homooligomers. Within homooligomers, the zinc-binding motif is created from residues of 3 different molecules. His-100 and Glu-102 from one molecule are ligands of the zinc ion, and His-107 and His-154 residues from additional molecules complete the site with tetrahedral coordination geometry. Part of a complex required for lens intermediate filament formation composed of BFSP1, BFSP2 and CRYAA. In terms of processing, acetylation at Lys-70 may increase chaperone activity. Undergoes age-dependent proteolytical cleavage at the C-terminus.

The protein resides in the cytoplasm. It is found in the nucleus. Its function is as follows. Contributes to the transparency and refractive index of the lens. Acts as a chaperone, preventing aggregation of various proteins under a wide range of stress conditions. Required for the correct formation of lens intermediate filaments as part of a complex composed of BFSP1, BFSP2 and CRYAA. The protein is Alpha-crystallin A chain (CRYAA) of Melursus ursinus (Sloth bear).